The chain runs to 271 residues: Mannosyl-3-phosphoglycerate phosphatase (271 aa).

Asp-13 (nucleophile) is an active-site residue. Mg(2+) contacts are provided by Asp-13, Asp-15, and Asp-214.

It belongs to the HAD-like hydrolase superfamily. MPGP family. It depends on Mg(2+) as a cofactor.

The protein localises to the cytoplasm. The enzyme catalyses 2-O-(alpha-D-mannosyl)-3-phosphoglycerate + H2O = (2R)-2-O-(alpha-D-mannosyl)-glycerate + phosphate. This is Mannosyl-3-phosphoglycerate phosphatase (yedP) from Escherichia coli O6:K15:H31 (strain 536 / UPEC).